A 221-amino-acid chain; its full sequence is Endo-1,4-beta-xylanase 11A (221 aa).

The first 17 residues, 1-17 (MVSFTTLLTAVATAVSA), serve as a signal peptide directing secretion. The GH11 domain maps to 28-218 (RGIQPGTGVH…SSGSAEIEVR (191 aa)). A glycan (N-linked (GlcNAc...) asparagine) is linked at Asn-89. The active-site Nucleophile is Glu-113. Glu-205 functions as the Proton donor in the catalytic mechanism.

Belongs to the glycosyl hydrolase 11 (cellulase G) family.

It is found in the secreted. It carries out the reaction Endohydrolysis of (1-&gt;4)-beta-D-xylosidic linkages in xylans.. It functions in the pathway glycan degradation; xylan degradation. Its activity is regulated as follows. Retains an activity of 52.5% in the presence of 5 mM SDS. In terms of biological role, endo-1,4-beta-xylanase involved in the hydrolysis of xylan, a major structural heterogeneous polysaccharide found in plant biomass representing the second most abundant polysaccharide in the biosphere, after cellulose. Is an alkali-tolerant enzyme, exhibiting 50.6% of activity at pH 9.0, and 26.9% even at pH 10.0. This chain is Endo-1,4-beta-xylanase 11A, found in Humicola insolens (Soft-rot fungus).